The following is a 119-amino-acid chain: MVCSVVVALLALLSLSGLEALQHAPKIQVYSRHPAENGKPNFLNCYVSGFHPSDIEVDLLKNGKKIEKVEHSDLSFSKDWSFYLLYYTEFTPNEKDEYACRVSHVTFSTPKTVKWDRNI.

The N-terminal stretch at 1–20 (MVCSVVVALLALLSLSGLEA) is a signal peptide. The Ig-like C1-type domain maps to 25 to 114 (PKIQVYSRHP…VTFSTPKTVK (90 aa)). Cysteines 45 and 100 form a disulfide.

Belongs to the beta-2-microglobulin family. Heterodimer of an alpha chain and a beta chain. Beta-2-microglobulin is the beta-chain of major histocompatibility complex class I molecules.

The protein resides in the secreted. Functionally, component of the class I major histocompatibility complex (MHC). Involved in the presentation of peptide antigens to the immune system. In Cebuella pygmaea (Pygmy marmoset), this protein is Beta-2-microglobulin (B2M).